Here is an 82-residue protein sequence, read N- to C-terminus: Small ribosomal subunit protein uS17 (82 aa).

This sequence belongs to the universal ribosomal protein uS17 family. As to quaternary structure, part of the 30S ribosomal subunit.

Its function is as follows. One of the primary rRNA binding proteins, it binds specifically to the 5'-end of 16S ribosomal RNA. The polypeptide is Small ribosomal subunit protein uS17 (Shewanella halifaxensis (strain HAW-EB4)).